The primary structure comprises 363 residues: 3-isopropylmalate dehydrogenase (363 aa).

78–91 (GPKWEHLPPDQQPE) provides a ligand contact to NAD(+). 4 residues coordinate substrate: Arg-99, Arg-109, Arg-138, and Asp-227. Residues Asp-227, Asp-251, and Asp-255 each coordinate Mg(2+). 285–297 (GSAPDIAGKNIAN) lines the NAD(+) pocket.

It belongs to the isocitrate and isopropylmalate dehydrogenases family. LeuB type 1 subfamily. Homodimer. Requires Mg(2+) as cofactor. Mn(2+) is required as a cofactor.

Its subcellular location is the cytoplasm. It catalyses the reaction (2R,3S)-3-isopropylmalate + NAD(+) = 4-methyl-2-oxopentanoate + CO2 + NADH. Its pathway is amino-acid biosynthesis; L-leucine biosynthesis; L-leucine from 3-methyl-2-oxobutanoate: step 3/4. In terms of biological role, catalyzes the oxidation of 3-carboxy-2-hydroxy-4-methylpentanoate (3-isopropylmalate) to 3-carboxy-4-methyl-2-oxopentanoate. The product decarboxylates to 4-methyl-2 oxopentanoate. In Escherichia coli O157:H7, this protein is 3-isopropylmalate dehydrogenase.